We begin with the raw amino-acid sequence, 547 residues long: ATP synthase subunit alpha (547 aa).

173–180 lines the ATP pocket; the sequence is GDRQTGKT.

The protein belongs to the ATPase alpha/beta chains family. In terms of assembly, F-type ATPases have 2 components, CF(1) - the catalytic core - and CF(0) - the membrane proton channel. CF(1) has five subunits: alpha(3), beta(3), gamma(1), delta(1), epsilon(1). CF(0) has three main subunits: a(1), b(2) and c(9-12). The alpha and beta chains form an alternating ring which encloses part of the gamma chain. CF(1) is attached to CF(0) by a central stalk formed by the gamma and epsilon chains, while a peripheral stalk is formed by the delta and b chains.

It localises to the cell membrane. The catalysed reaction is ATP + H2O + 4 H(+)(in) = ADP + phosphate + 5 H(+)(out). In terms of biological role, produces ATP from ADP in the presence of a proton gradient across the membrane. The alpha chain is a regulatory subunit. This is ATP synthase subunit alpha from Thermobifida fusca (strain YX).